The following is a 166-amino-acid chain: Outer membrane protein assembly factor BamE (166 aa).

Positions 1–18 (MKRTVFPLAVAAALTLTA) are cleaved as a signal peptide. Cysteine 19 is lipidated: N-palmitoyl cysteine. A lipid anchor (S-diacylglycerol cysteine) is attached at cysteine 19. The disordered stretch occupies residues 143 to 166 (LFSNDDSGEMPVKPESKPSDLLNE).

It belongs to the BamE family. In terms of assembly, part of the Bam complex.

The protein resides in the cell outer membrane. Functionally, part of the outer membrane protein assembly complex, which is involved in assembly and insertion of beta-barrel proteins into the outer membrane. The chain is Outer membrane protein assembly factor BamE from Methylomonas methanica (strain DSM 25384 / MC09).